The primary structure comprises 216 residues: Redox-sensing transcriptional repressor Rex 1 (216 aa).

The segment at residues 16–55 (LYYRYLRMLHDTGKNKVSSTELSEAVQVDSATIRRDFSYF) is a DNA-binding region (H-T-H motif). 90 to 95 (GVGNLG) is an NAD(+) binding site.

Belongs to the transcriptional regulatory Rex family. As to quaternary structure, homodimer.

The protein resides in the cytoplasm. Modulates transcription in response to changes in cellular NADH/NAD(+) redox state. The protein is Redox-sensing transcriptional repressor Rex 1 of Enterococcus faecalis (strain ATCC 700802 / V583).